The sequence spans 616 residues: DEAD-box ATP-dependent RNA helicase 53, mitochondrial (616 aa).

Residues 1-81 constitute a mitochondrion transit peptide; the sequence is MITTVLRRSL…DFRASMVSQA (81 aa). Residues 104–132 carry the Q motif motif; it reads LAISELGISPEIVKALSSKGIEKLFPIQK. One can recognise a Helicase ATP-binding domain in the interval 135 to 309; it reads LEPAMEGRDM…KKYLNNPLTV (175 aa). 148 to 155 contacts ATP; that stretch reads ARTGTGKT. The DEAD box signature appears at 257–260; sequence DEAD. Positions 338–482 constitute a Helicase C-terminal domain; that stretch reads IIGPLVTEHA…ELPSIAVERG (145 aa). The tract at residues 489-616 is disordered; the sequence is GIGSRSGGSF…FGSNDGKRSY (128 aa). Gly residues-rich tracts occupy residues 492–501 and 508–531; these read SRSGGSFGGG and SFGG…GRSG. 2 stretches are compositionally biased toward low complexity: residues 532–568 and 578–587; these read GSSN…SGGR and GSSNNRSSGF.

This sequence belongs to the DEAD box helicase family. DDX21/DDX50 subfamily.

Its subcellular location is the mitochondrion. It carries out the reaction ATP + H2O = ADP + phosphate + H(+). The polypeptide is DEAD-box ATP-dependent RNA helicase 53, mitochondrial (RH53) (Arabidopsis thaliana (Mouse-ear cress)).